We begin with the raw amino-acid sequence, 354 residues long: Ribosomal RNA large subunit methyltransferase K (354 aa).

This sequence belongs to the methyltransferase superfamily.

It localises to the cytoplasm. It carries out the reaction guanosine(2069) in 23S rRNA + S-adenosyl-L-methionine = N(2)-methylguanosine(2069) in 23S rRNA + S-adenosyl-L-homocysteine + H(+). Specifically methylates the guanine in position 2069 (m7G2069) of 23S rRNA. In Neisseria meningitidis serogroup B (strain ATCC BAA-335 / MC58), this protein is Ribosomal RNA large subunit methyltransferase K (rlmK).